A 364-amino-acid polypeptide reads, in one-letter code: tRNA-specific 2-thiouridylase MnmA (364 aa).

ATP contacts are provided by residues 13–20 and methionine 39; that span reads GMSGGVDS. Positions 99–101 are interaction with target base in tRNA; it reads NPD. Cysteine 104 functions as the Nucleophile in the catalytic mechanism. The cysteines at positions 104 and 199 are disulfide-linked. Position 128 (glycine 128) interacts with ATP. The interaction with tRNA stretch occupies residues 149-151; that stretch reads KDQ. Cysteine 199 functions as the Cysteine persulfide intermediate in the catalytic mechanism. Residues 311–312 are interaction with tRNA; sequence RY.

The protein belongs to the MnmA/TRMU family.

The protein localises to the cytoplasm. The catalysed reaction is S-sulfanyl-L-cysteinyl-[protein] + uridine(34) in tRNA + AH2 + ATP = 2-thiouridine(34) in tRNA + L-cysteinyl-[protein] + A + AMP + diphosphate + H(+). In terms of biological role, catalyzes the 2-thiolation of uridine at the wobble position (U34) of tRNA, leading to the formation of s(2)U34. This chain is tRNA-specific 2-thiouridylase MnmA, found in Alcanivorax borkumensis (strain ATCC 700651 / DSM 11573 / NCIMB 13689 / SK2).